Here is a 330-residue protein sequence, read N- to C-terminus: Urokinase plasminogen activator surface receptor (330 aa).

Residues 1-20 (MGQPLLLLLLVYTYIPGSWG) form the signal peptide. 3 UPAR/Ly6 domains span residues 21–112 (LRCL…RNRY), 113–208 (LECA…PPNG), and 209–300 (LQCY…PGKG). 3 disulfides stabilise this stretch: cysteine 23-cysteine 44, cysteine 26-cysteine 32, and cysteine 37-cysteine 65. An N-linked (GlcNAc...) asparagine glycan is attached at asparagine 28. Asparagine 72 carries N-linked (GlcNAc...) asparagine glycosylation. Intrachain disulfides connect cysteine 91–cysteine 96, cysteine 115–cysteine 142, cysteine 118–cysteine 125, cysteine 135–cysteine 164, cysteine 170–cysteine 187, cysteine 188–cysteine 193, cysteine 211–cysteine 239, cysteine 214–cysteine 222, cysteine 232–cysteine 258, cysteine 264–cysteine 282, and cysteine 283–cysteine 288. Residues asparagine 179 and asparagine 189 are each glycosylated (N-linked (GlcNAc...) asparagine). Asparagine 279 carries an N-linked (GlcNAc...) asparagine glycan. A lipid anchor (GPI-anchor amidated glycine) is attached at glycine 300. Positions 301 to 330 (GAPKTSPAHLSFFVSLLLTARLWGATLLCT) are cleaved as a propeptide — removed in mature form.

Monomer. Interacts (via the UPAR/Ly6 domains) with SRPX2. Interacts with MRC2. Interacts with SORL1 (via N-terminal ectodomain); this interaction decreases PLAUR internalization. The ternary complex composed of PLAUR-PLAU-SERPINE1 also interacts with SORL1. Interacts with CD82; this interaction prevents PLAUR from binding to its high affinity ligand PLAU.

It localises to the cell membrane. Acts as a receptor for urokinase plasminogen activator. Plays a role in localizing and promoting plasmin formation. Mediates the proteolysis-independent signal transduction activation effects of U-PA. This is Urokinase plasminogen activator surface receptor (PLAUR) from Bos taurus (Bovine).